The primary structure comprises 167 residues: Endoribonuclease YbeY (167 aa).

Positions 131, 135, and 141 each coordinate Zn(2+).

This sequence belongs to the endoribonuclease YbeY family. It depends on Zn(2+) as a cofactor.

The protein resides in the cytoplasm. Its function is as follows. Single strand-specific metallo-endoribonuclease involved in late-stage 70S ribosome quality control and in maturation of the 3' terminus of the 16S rRNA. This chain is Endoribonuclease YbeY, found in Rickettsia rickettsii (strain Iowa).